Here is a 352-residue protein sequence, read N- to C-terminus: 3-isopropylmalate dehydrogenase (352 aa).

Substrate is bound by residues Arg96, Arg106, Arg134, and Asp220. Asp220, Asp244, and Asp248 together coordinate Mg(2+). 277-289 contributes to the NAD(+) binding site; sequence GSAPDIAGKNLAN.

This sequence belongs to the isocitrate and isopropylmalate dehydrogenases family. LeuB type 1 subfamily. In terms of assembly, homodimer. It depends on Mg(2+) as a cofactor. The cofactor is Mn(2+).

Its subcellular location is the cytoplasm. It catalyses the reaction (2R,3S)-3-isopropylmalate + NAD(+) = 4-methyl-2-oxopentanoate + CO2 + NADH. It functions in the pathway amino-acid biosynthesis; L-leucine biosynthesis; L-leucine from 3-methyl-2-oxobutanoate: step 3/4. In terms of biological role, catalyzes the oxidation of 3-carboxy-2-hydroxy-4-methylpentanoate (3-isopropylmalate) to 3-carboxy-4-methyl-2-oxopentanoate. The product decarboxylates to 4-methyl-2 oxopentanoate. This chain is 3-isopropylmalate dehydrogenase, found in Desulfitobacterium hafniense (strain Y51).